Consider the following 1545-residue polypeptide: Immunoglobulin A1 protease autotransporter (1545 aa).

The signal sequence occupies residues 1–25; sequence MLNKKFKLNFIALTVAYALTPYTEA. The Peptidase S6 domain maps to 26-336; the sequence is ALVRDDVDYQ…NIYKPEFAEK (311 aa). Residue Ser292 is part of the active site. A compositionally biased stretch (polar residues) spans 995–1019; it reads TVDTTNITTPNNIQADVPSVPSNNE. The tract at residues 995 to 1246 is disordered; the sequence is TVDTTNITTP…NVEPATTSSN (252 aa). The segment covering 1036 to 1046 has biased composition (low complexity); the sequence is TPSETTETVAE. Over residues 1048 to 1060 the composition is skewed to basic and acidic residues; sequence SKQESKTVEKNEQ. Polar residues predominate over residues 1080 to 1094; sequence VKANTQTNEVAQSGS. Over residues 1095–1125 the composition is skewed to basic and acidic residues; sequence ETKETQTTETKETATVEKEEKAKVETEKTQE. Polar residues-rich tracts occupy residues 1129 to 1145 and 1161 to 1222; these read VTSQ…TVQP and EPQS…SSNK. The Autotransporter domain occupies 1293-1545; it reads NNEGQYNVWV…TAELKLSFSF (253 aa).

The protein localises to the periplasm. The protein resides in the secreted. Its subcellular location is the cell surface. It is found in the cell outer membrane. It carries out the reaction Cleavage of immunoglobulin A molecules at certain Pro-|-Xaa bonds in the hinge region. No small molecule substrates are known.. In terms of biological role, virulence factor; cleaves host immunoglobulin A producing intact Fc and Fab fragments. This Haemophilus influenzae protein is Immunoglobulin A1 protease autotransporter (iga).